We begin with the raw amino-acid sequence, 408 residues long: Tripartite motif-containing protein 59 (408 aa).

The RING-type zinc finger occupies 10 to 60 (CSICYSLFEDPRVLPCSHTFCRSCLEGVIQLSSNFSIWRPLRVPLKCPNCR). The segment at 92 to 134 (SDVATCSEHYRQPLNVYCLLDKKLVCGHCLTIGKHNGHPIDDL) adopts a B box-type zinc-finger fold. Zn(2+)-binding residues include cysteine 97, histidine 100, cysteine 120, and histidine 126. Residues 163 to 247 (LIEKLKEQKA…LNTSIQKEES (85 aa)) adopt a coiled-coil conformation. The chain crosses the membrane as a helical span at residues 333–353 (ANPLSVTFIFTVIIAIAVLSF).

It belongs to the TRIM/RBCC family. Interacts with ECSIT.

The protein resides in the endoplasmic reticulum membrane. Functionally, may serve as a multifunctional regulator for innate immune signaling pathways. This Gallus gallus (Chicken) protein is Tripartite motif-containing protein 59 (TRIM59).